Reading from the N-terminus, the 449-residue chain is MGKEKVHINIVVIGHVDSGKSTTTGHLIYKLGGIDKRVIERFEKEAAEMNKRSFKYAWVLDKLKAERERGITIDIALWKFETNKYYCTVIDAPGHRDFIKNMITGTSQADCAVLIIDPTTGGFEAGISKDGQTREHALLAFTLGVKQMICCCNKMDATTPKYSKARYDEIVKEVSSYLKKVGYNPEKIAFVPISGFEGDNMIERSTNLDWYKGPTLLDALDQINEPKRPSDKPLRLPLQDVYKIGGIGTVPVGRVETGTIKPGMVVTFGPSGLTTEVKSVEMHHESLLEALPGDNVGFNVKNVSVKDLKRGYVASNSKDDPAKGAASFTSQVIIMNHPGQIGNGYAPVLDCHTSHIAVKFAELLTKIDRRSGKELEKEPKFLKNGDAGMVKMLPTKPMVVETFAEYPPLGRFAVRVMRQTVAVGVIKAVEKKDPTGAKVTKAAAKKGAK.

One can recognise a tr-type G domain in the interval 5-230; sequence KVHINIVVIG…DQINEPKRPS (226 aa). The tract at residues 14-21 is G1; that stretch reads GHVDSGKS. Residue 14 to 21 participates in GTP binding; that stretch reads GHVDSGKS. An N6,N6-dimethyllysine modification is found at Lys55. The interval 70 to 74 is G2; the sequence is GITID. Lys79 is subject to N6,N6,N6-trimethyllysine. Residues 91 to 94 form a G3 region; sequence DAPG. GTP contacts are provided by residues 91–95 and 153–156; these read DAPGH and NKMD. A G4 region spans residues 153–156; that stretch reads NKMD. Position 187 is an N6,N6,N6-trimethyllysine (Lys187). A G5 region spans residues 194–196; it reads SGF. Lys261 carries the N6-methyllysine modification. Position 289 is a 5-glutamyl glycerylphosphorylethanolamine (Glu289). Lys306 is modified (N6,N6,N6-trimethyllysine). 5-glutamyl glycerylphosphorylethanolamine is present on Glu362. N6,N6,N6-trimethyllysine is present on Lys396.

It belongs to the TRAFAC class translation factor GTPase superfamily. Classic translation factor GTPase family. EF-Tu/EF-1A subfamily.

The protein localises to the cytoplasm. This protein promotes the GTP-dependent binding of aminoacyl-tRNA to the A-site of ribosomes during protein biosynthesis. In Daucus carota (Wild carrot), this protein is Elongation factor 1-alpha.